The sequence spans 102 residues: Carboxysome shell protein CcmK2 (102 aa).

The 87-residue stretch at 4 to 90 (AVGMIETRGF…PHENLEYVLP (87 aa)) folds into the BMC domain.

It belongs to the bacterial microcompartments protein family. CcmK subfamily. Homohexamer. Stacked hexamers, with the concave faces together, have also been crystallized. Interacts preferentially with itself, then with CcmK1 and CcmK4a in vitro. May interact with CcmL, this occurs at very high CcmK2 concentrations. Interacts with CcmN and CcmO in the carboxysome.

Its subcellular location is the carboxysome. In terms of biological role, probably the major shell protein of the carboxysome, a polyhedral inclusion where RuBisCO (ribulose bisphosphate carboxylase, rbcL-rbcS) is sequestered. Assembles into hexamers which make sheets that form the facets of the polyhedral carboxysome. The hexamer central pore probably regulates metabolite flux. The protein is Carboxysome shell protein CcmK2 of Thermosynechococcus vestitus (strain NIES-2133 / IAM M-273 / BP-1).